Consider the following 1481-residue polypeptide: Cystic fibrosis transmembrane conductance regulator (1481 aa).

Topologically, residues 1–77 (MQRSPLEKAS…KLINALRRCF (77 aa)) are cytoplasmic. A helical membrane pass occupies residues 78–98 (FWRFMFYGILLYLGEVTKAVQ). An ABC transmembrane type-1 1 domain is found at 81 to 365 (FMFYGILLYL…WAVQTWYDSL (285 aa)). The Extracellular segment spans residues 99–122 (PLLLGRIIASYDPDNKEERSIAIY). The helical transmembrane segment at 123–146 (LGIGLCLLFIVRTLLLHPAIFGLH) threads the bilayer. Residues 147 to 195 (HIGMQMRIAMFSLIYKKTLKLSSRVLDKISIGQLVSLLSNNLNKFDEGL) are Cytoplasmic-facing. A helical membrane pass occupies residues 196-216 (ALAHFVWIVPLQVALLMGLIW). Residues 217-222 (ELLQAS) lie on the Extracellular side of the membrane. Residues 223 to 243 (AFCGLGFLIVLALFQAGLGRM) traverse the membrane as a helical segment. Over 244-298 (MMKYRDQRAGKINERLVITSEMIENIQSVKAYCWEEAMEKMIENLRQTELKLTRK) the chain is Cytoplasmic. The chain crosses the membrane as a helical span at residues 299 to 319 (AAYVRYFNSSAFFFSGFFVVF). The Extracellular portion of the chain corresponds to 320–339 (LSVLPYALIKGIVLRKIFTT). Residues 340 to 358 (ISFCIVLRMAVTRQFPWAV) traverse the membrane as a helical segment. The Cytoplasmic portion of the chain corresponds to 359 to 858 (QTWYDSLGAI…YLRYITVHKS (500 aa)). ATP-binding positions include W401, S434, 458-465 (GSTGAGKT), and Q493. The region spanning 423 to 646 (NDDDSLFFSN…RPDFSSKLMG (224 aa)) is the ABC transporter 1 domain. C524 carries the S-palmitoyl cysteine lipid modification. Phosphoserine is present on residues S549 and S660. The segment at 654–831 (SAERRNSILT…EEINEEDLKE (178 aa)) is disordered R region. S670 is modified (phosphoserine; by PKA). Phosphoserine is present on S686. Residue K688 forms a Glycyl lysine isopeptide (Lys-Gly) (interchain with G-Cter in ubiquitin) linkage. S700 and S712 each carry phosphoserine. Position 717 is a phosphothreonine (T717). Phosphoserine occurs at positions 737, 753, 768, 790, 795, and 813. A helical transmembrane segment spans residues 859–879 (LIFVLIWCLVIFLAEVAASLV). Positions 859–1155 (LIFVLIWCLV…AVNSSIDVDS (297 aa)) constitute an ABC transmembrane type-1 2 domain. Residues 880–918 (VLWFLGNTPPQDKGNSTYSRNNSYAVIITRTSSYYVFYI) are Extracellular-facing. 2 N-linked (GlcNAc...) asparagine glycosylation sites follow: N894 and N900. Residues 919 to 939 (YVGVADTLLAMGFFRGLPLVH) traverse the membrane as a discontinuously helical segment. Residues 940–990 (TLITVSKILHHKMLHSVLQAPMSTLNTLKAGGILNRFSKDIAILDDLLPLT) are Cytoplasmic-facing. Residues 991–1011 (IFDFIQLLLIVIGAIAVVAVL) form a helical membrane-spanning segment. At 1012–1013 (QP) the chain is on the extracellular side. Residues 1014–1034 (YIFVATVPVIVAFIMLRAYFL) form a helical membrane-spanning segment. The Cytoplasmic portion of the chain corresponds to 1035–1095 (QTSQQLKQLE…TANWFLYLST (61 aa)). The chain crosses the membrane as a helical span at residues 1096 to 1116 (LRWFQMRIEMIFVIFFIAVTF). Topologically, residues 1117–1130 (ISILTTGEGEGTVG) are extracellular. A helical transmembrane segment spans residues 1131–1151 (IILTLAMNIMSTLQWAVNSSI). Topologically, residues 1152-1481 (DVDSLMRSVS…TEEEVQDTRL (330 aa)) are cytoplasmic. In terms of domain architecture, ABC transporter 2 spans 1211–1444 (MTVKDLTAKY…RSLFQQAISP (234 aa)). Residues Y1220 and 1245–1252 (GRTGSGKS) each bind ATP. Residues 1387–1481 (RTLKQAFADC…TEEEVQDTRL (95 aa)) are interaction with GORASP2. The S-palmitoyl cysteine moiety is linked to residue C1396. Phosphoserine occurs at positions 1445 and 1457. The PDZ-binding motif lies at 1479–1481 (TRL).

The protein belongs to the ABC transporter superfamily. ABCC family. CFTR transporter (TC 3.A.1.202) subfamily. In terms of assembly, monomer; does not require oligomerization for channel activity. May form oligomers in the membrane. Interacts with SLC26A3, SLC26A6 and NHERF1. Interacts with SHANK2. Interacts with MYO6. Interacts (via C-terminus) with GOPC (via PDZ domain); this promotes CFTR internalization and thereby decreases channel activity. Interacts with SLC4A7 through NHERF1. Found in a complex with MYO5B and RAB11A. Interacts with ANO1. Interacts with SLC26A8. Interacts with AHCYL1; the interaction increases CFTR activity. Interacts with CSE1L. The core-glycosylated form interacts with GORASP2 (via PDZ GRASP-type 1 domain) in respone to ER stress. Interacts with MARCHF2; the interaction leads to CFTR ubiqtuitination and degradation. Interacts with ADGRG2. N-glycosylated. In terms of processing, phosphorylated; cAMP treatment promotes phosphorylation and activates the channel. Dephosphorylation decreases the ATPase activity (in vitro). Phosphorylation at PKA sites activates the channel. Phosphorylation at PKC sites enhances the response to phosphorylation by PKA. Phosphorylated by AMPK; this inhibits channel activity. Post-translationally, ubiquitinated, leading to its degradation in the lysosome. Deubiquitination by USP10 in early endosomes enhances its endocytic recycling to the cell membrane. Ubiquitinated by RNF185 during ER stress. Ubiquitinated by MARCHF2.

Its subcellular location is the apical cell membrane. The protein resides in the early endosome membrane. It localises to the cell membrane. It is found in the recycling endosome membrane. The protein localises to the endoplasmic reticulum membrane. Its subcellular location is the nucleus. The enzyme catalyses ATP + H2O + closed Cl(-) channel = ADP + phosphate + open Cl(-) channel.. It catalyses the reaction chloride(in) = chloride(out). The catalysed reaction is hydrogencarbonate(in) = hydrogencarbonate(out). It carries out the reaction ATP + H2O = ADP + phosphate + H(+). Its function is as follows. Epithelial ion channel that plays an important role in the regulation of epithelial ion and water transport and fluid homeostasis. Mediates the transport of chloride ions across the cell membrane. Possesses an intrinsic ATPase activity and utilizes ATP to gate its channel; the passive flow of anions through the channel is gated by cycles of ATP binding and hydrolysis by the ATP-binding domains. The ion channel is also permeable to HCO(3)(-); selectivity depends on the extracellular chloride concentration. Exerts its function also by modulating the activity of other ion channels and transporters. Contributes to the regulation of the pH and the ion content of the epithelial fluid layer. Modulates the activity of the epithelial sodium channel (ENaC) complex, in part by regulating the cell surface expression of the ENaC complex. May regulate bicarbonate secretion and salvage in epithelial cells by regulating the transporter SLC4A7. Can inhibit the chloride channel activity of ANO1. Plays a role in the chloride and bicarbonate homeostasis during sperm epididymal maturation and capacitation. This Macaca nemestrina (Pig-tailed macaque) protein is Cystic fibrosis transmembrane conductance regulator.